A 240-amino-acid chain; its full sequence is Ribonuclease PH (240 aa).

Phosphate-binding positions include arginine 86 and 124 to 126 (GTR).

Belongs to the RNase PH family. In terms of assembly, homohexameric ring arranged as a trimer of dimers.

The catalysed reaction is tRNA(n+1) + phosphate = tRNA(n) + a ribonucleoside 5'-diphosphate. In terms of biological role, phosphorolytic 3'-5' exoribonuclease that plays an important role in tRNA 3'-end maturation. Removes nucleotide residues following the 3'-CCA terminus of tRNAs; can also add nucleotides to the ends of RNA molecules by using nucleoside diphosphates as substrates, but this may not be physiologically important. Probably plays a role in initiation of 16S rRNA degradation (leading to ribosome degradation) during starvation. In Rickettsia prowazekii (strain Madrid E), this protein is Ribonuclease PH.